We begin with the raw amino-acid sequence, 152 residues long: Ribosome maturation factor RimP (152 aa).

It belongs to the RimP family.

It localises to the cytoplasm. Its function is as follows. Required for maturation of 30S ribosomal subunits. The protein is Ribosome maturation factor RimP of Ruminiclostridium cellulolyticum (strain ATCC 35319 / DSM 5812 / JCM 6584 / H10) (Clostridium cellulolyticum).